A 186-amino-acid chain; its full sequence is Ribosome-recycling factor (186 aa).

This sequence belongs to the RRF family.

It is found in the cytoplasm. Responsible for the release of ribosomes from messenger RNA at the termination of protein biosynthesis. May increase the efficiency of translation by recycling ribosomes from one round of translation to another. In Nitratidesulfovibrio vulgaris (strain DP4) (Desulfovibrio vulgaris), this protein is Ribosome-recycling factor.